The following is a 542-amino-acid chain: Adenosylmethionine-8-amino-7-oxononanoate aminotransferase (542 aa).

170–171 (GS) contributes to the pyridoxal 5'-phosphate binding site. Tyr205 contacts substrate. Asp311 contributes to the pyridoxal 5'-phosphate binding site. Substrate-binding residues include Lys340, Gly375, and Arg470. Lys340 is subject to N6-(pyridoxal phosphate)lysine. Residues 509–542 (DGGLWTKRPDGPDNPDKANTPDTPDGARTGETVV) form a disordered region. The span at 515 to 524 (KRPDGPDNPD) shows a compositional bias: basic and acidic residues.

This sequence belongs to the class-III pyridoxal-phosphate-dependent aminotransferase family. BioA subfamily. As to quaternary structure, homodimer. Pyridoxal 5'-phosphate is required as a cofactor.

It localises to the cytoplasm. The enzyme catalyses (8S)-8-amino-7-oxononanoate + S-adenosyl-L-methionine = S-adenosyl-4-methylsulfanyl-2-oxobutanoate + (7R,8S)-7,8-diammoniononanoate. Its pathway is cofactor biosynthesis; biotin biosynthesis; 7,8-diaminononanoate from 8-amino-7-oxononanoate (SAM route): step 1/1. Catalyzes the transfer of the alpha-amino group from S-adenosyl-L-methionine (SAM) to 7-keto-8-aminopelargonic acid (KAPA) to form 7,8-diaminopelargonic acid (DAPA). It is the only aminotransferase known to utilize SAM as an amino donor. The sequence is that of Adenosylmethionine-8-amino-7-oxononanoate aminotransferase from Nitratidesulfovibrio vulgaris (strain ATCC 29579 / DSM 644 / CCUG 34227 / NCIMB 8303 / VKM B-1760 / Hildenborough) (Desulfovibrio vulgaris).